The chain runs to 428 residues: GTPase Obg (428 aa).

In terms of domain architecture, Obg spans 1–158; that stretch reads MFVDQVKIYV…RYVTLELKLL (158 aa). The 171-residue stretch at 159–329 folds into the OBG-type G domain; sequence ADVGLVGFPS…LLFAIADLLE (171 aa). GTP-binding positions include 165 to 172, 190 to 194, 212 to 215, 282 to 285, and 310 to 312; these read GFPSVGKS, FTTIV, DLPG, NKMD, and SAV. The Mg(2+) site is built by Ser-172 and Thr-192. Residues 350-428 enclose the OCT domain; the sequence is KLEKEEAPFH…LLNYEFEFVD (79 aa).

This sequence belongs to the TRAFAC class OBG-HflX-like GTPase superfamily. OBG GTPase family. In terms of assembly, monomer. It depends on Mg(2+) as a cofactor.

The protein resides in the cytoplasm. Functionally, an essential GTPase which binds GTP, GDP and possibly (p)ppGpp with moderate affinity, with high nucleotide exchange rates and a fairly low GTP hydrolysis rate. Plays a role in control of the cell cycle, stress response, ribosome biogenesis and in those bacteria that undergo differentiation, in morphogenesis control. The chain is GTPase Obg from Anoxybacillus flavithermus (strain DSM 21510 / WK1).